The following is a 409-amino-acid chain: Lysosome-associated membrane glycoprotein 1 (409 aa).

An N-terminal signal peptide occupies residues 1 to 25; that stretch reads MAAPGGARRRPLLLLLFAGLVHGAS. The tract at residues 26–187 is first lumenal domain; sequence AVFVVKNGNG…SNFSREETRC (162 aa). Over 26 to 374 the chain is Lumenal; it reads AVFVVKNGNG…EECQLDENSM (349 aa). N-linked (GlcNAc...) asparagine glycosylation is found at N34, N59, N72, N80, N103, N117, N126, N146, N161, and N179. C38 and C76 form a disulfide bridge. Cysteines 151 and 187 form a disulfide. Residues 180 to 207 are disordered; the sequence is FSREETRCEQDLPTPTTPPQPAPTPAPA. A hinge region spans residues 188–219; that stretch reads EQDLPTPTTPPQPAPTPAPASPAVFRYNVSGS. Positions 194-207 are enriched in pro residues; it reads PTTPPQPAPTPAPA. N-linked (GlcNAc...) asparagine glycans are attached at residues N215, N220, N241, N253, N260, N285, N299, and N314. The segment at 220–374 is second lumenal domain; that stretch reads NGTCLLASMG…EECQLDENSM (155 aa). The cysteines at positions 223 and 261 are disulfide-linked. Cysteines 330 and 367 form a disulfide. The helical transmembrane segment at 375 to 398 threads the bilayer; it reads LIPIAVGGALAGLVLIVLLAYLIG. At 399–409 the chain is on the cytoplasmic side; sequence RKRSHAGYQTI.

The protein belongs to the LAMP family. Interacts with ABCB9; this interaction strongly stabilizes ABCB9 and protects ABCB9 against lysosomal degradation. Interacts with FURIN. Interacts with TMEM175; inhibiting the proton channel activity of TMEM175. Post-translationally, O- and N-glycosylated; some of the N-glycans attached to LAMP-1 are polylactosaminoglycans.

The protein localises to the lysosome membrane. It is found in the endosome membrane. Its subcellular location is the late endosome membrane. It localises to the cell membrane. The protein resides in the cytolytic granule membrane. Functionally, lysosomal membrane glycoprotein which plays an important role in lysosome biogenesis, lysosomal pH regulation, autophagy and cholesterol homeostasis. Acts as an important regulator of lysosomal lumen pH regulation by acting as a direct inhibitor of the proton channel TMEM175, facilitating lysosomal acidification for optimal hydrolase activity. Also plays an important role in NK-cells cytotoxicity. Mechanistically, participates in cytotoxic granule movement to the cell surface and perforin trafficking to the lytic granule. In addition, protects NK-cells from degranulation-associated damage induced by their own cytotoxic granule content. Presents carbohydrate ligands to selectins. This is Lysosome-associated membrane glycoprotein 1 (LAMP1) from Bos taurus (Bovine).